A 336-amino-acid polypeptide reads, in one-letter code: G-protein coupled receptor homolog FPV027 (336 aa).

The Extracellular portion of the chain corresponds to 1 to 31 (MSMNNITSKMNQDSYGYFQLHMSDFTRVSLS). N-linked (GlcNAc...) asparagine; by host glycosylation occurs at N5. The helical transmembrane segment at 32–52 (IVFTLVFLVGIIGNAVIIWFI) threads the bilayer. The Cytoplasmic portion of the chain corresponds to 53 to 63 (GFKWTKTISTL). The chain crosses the membrane as a helical span at residues 64–84 (LFINLALADSLFLIFIPVYTV). At 85-101 (YVLSNFHWYLGEFLCRV) the chain is on the extracellular side. The cysteines at positions 99 and 178 are disulfide-linked. Residues 102–122 (SSFFFTTNMYASMFLLTFISI) traverse the membrane as a helical segment. Residues 123 to 143 (DKYLTLTSHRLVYKYRKYRNY) are Cytoplasmic-facing. The chain crosses the membrane as a helical span at residues 144–164 (YVCIGAIWCISIALGVPTLYY). Residues 165 to 200 (KRVILSSSRNETRCISYYGDDKHTAITIYRIIVCIR) are Extracellular-facing. The N-linked (GlcNAc...) asparagine; by host glycan is linked to N174. The helical transmembrane segment at 201–221 (FIIGYVFPMTVILLSYALIVY) threads the bilayer. Over 222–240 (KVKFINKPPNRSFMITTAS) the chain is Cytoplasmic. The chain crosses the membrane as a helical span at residues 241-261 (IFVFLACWTPHHVLNIISLYG). The Extracellular segment spans residues 262-276 (LKSTSMYNYIKESIP). A helical membrane pass occupies residues 277 to 297 (FVNAIAFVYSAINPIIYIFVI). Topologically, residues 298–336 (RLTSTYDSDTMDELRSALLDEETTSTEDCSDIEISDISR) are cytoplasmic.

Belongs to the G-protein coupled receptor 1 family.

It is found in the host cell membrane. In Vertebrata (FPV), this protein is G-protein coupled receptor homolog FPV027.